Consider the following 348-residue polypeptide: Fasciculation and elongation protein zeta-2 (348 aa).

Residues 11 to 40 (YEFQEPAGSVQEQENCNASPEAGAGAHAGG) form a disordered region. Residues serine 130, serine 171, and serine 190 each carry the phosphoserine modification. The stretch at 206-280 (ERVKRLSVSE…TAKKKKKLKS (75 aa)) forms a coiled coil. Residues 265–296 (QKEHKETAKKKKKLKSGSSQNGRSERSHMPGT) form a disordered region.

This sequence belongs to the zygin family. In terms of assembly, homodimer; disulfide-linked. May form heterodimers with FEZ1. Interacts with synaptotagmin.

In terms of biological role, involved in axonal outgrowth and fasciculation. This is Fasciculation and elongation protein zeta-2 (Fez2) from Mus musculus (Mouse).